The following is a 371-amino-acid chain: Putative F-box protein At1g58090 (371 aa).

An F-box domain is found at 1–46 (MVSKKLPLDLEEEILFRVPPRSLVRFRSVCREWNTLFKNKRFINKN).

The protein is Putative F-box protein At1g58090 of Arabidopsis thaliana (Mouse-ear cress).